A 417-amino-acid chain; its full sequence is UDP-N-acetylglucosamine 1-carboxyvinyltransferase (417 aa).

22 to 23 (KN) is a phosphoenolpyruvate binding site. R92 provides a ligand contact to UDP-N-acetyl-alpha-D-glucosamine. The Proton donor role is filled by C116. C116 is subject to 2-(S-cysteinyl)pyruvic acid O-phosphothioketal. UDP-N-acetyl-alpha-D-glucosamine-binding positions include 161-164 (KVSV), D305, and I327.

This sequence belongs to the EPSP synthase family. MurA subfamily.

The protein resides in the cytoplasm. The catalysed reaction is phosphoenolpyruvate + UDP-N-acetyl-alpha-D-glucosamine = UDP-N-acetyl-3-O-(1-carboxyvinyl)-alpha-D-glucosamine + phosphate. It functions in the pathway cell wall biogenesis; peptidoglycan biosynthesis. In terms of biological role, cell wall formation. Adds enolpyruvyl to UDP-N-acetylglucosamine. This is UDP-N-acetylglucosamine 1-carboxyvinyltransferase from Pelagibacter ubique (strain HTCC1062).